Reading from the N-terminus, the 909-residue chain is Translation initiation factor IF-2 (909 aa).

Residues 49 to 314 (LNREQGGSAG…GKQRKTSTLQ (266 aa)) are disordered. Composition is skewed to basic and acidic residues over residues 99–177 (DAVE…EHKQ), 186–236 (IQSE…KWSS), and 255–270 (RAAEDENDAKVEGDRR). Over residues 271–285 (ARGRSGKATRQKKNN) the composition is skewed to basic residues. The segment covering 286 to 299 (KHSESKADREEARA) has biased composition (basic and acidic residues). The tr-type G domain occupies 408-577 (PRAPVVTIMG…LLQAEVLELK (170 aa)). A G1 region spans residues 417–424 (GHVDHGKT). GTP is bound at residue 417 to 424 (GHVDHGKT). Residues 442–446 (GITQH) form a G2 region. Residues 463–466 (DTPG) are G3. GTP-binding positions include 463–467 (DTPGH) and 517–520 (NKID). Positions 517-520 (NKID) are G4. A G5 region spans residues 553–555 (SAK).

Belongs to the TRAFAC class translation factor GTPase superfamily. Classic translation factor GTPase family. IF-2 subfamily.

Its subcellular location is the cytoplasm. One of the essential components for the initiation of protein synthesis. Protects formylmethionyl-tRNA from spontaneous hydrolysis and promotes its binding to the 30S ribosomal subunits. Also involved in the hydrolysis of GTP during the formation of the 70S ribosomal complex. The protein is Translation initiation factor IF-2 of Photorhabdus laumondii subsp. laumondii (strain DSM 15139 / CIP 105565 / TT01) (Photorhabdus luminescens subsp. laumondii).